Consider the following 282-residue polypeptide: Inosose isomerase (282 aa).

Positions 142, 174, 200, and 246 each coordinate a divalent metal cation.

The protein belongs to the IolI family. A divalent metal cation serves as cofactor.

The catalysed reaction is scyllo-inosose = scyllo-inosine. It functions in the pathway polyol metabolism; myo-inositol degradation into acetyl-CoA. Involved in the reversible interconverion of 2-keto-myo-inositol (2KMI, inosose or 2,4,6/3,5-pentahydroxycyclohexanone) to 1-keto-D-chiro-inositol (1KDCI or 2,3,5/4,6-pentahydroxycyclohexanone). In Halalkalibacterium halodurans (strain ATCC BAA-125 / DSM 18197 / FERM 7344 / JCM 9153 / C-125) (Bacillus halodurans), this protein is Inosose isomerase (iolI).